We begin with the raw amino-acid sequence, 162 residues long: Phosphopantetheine adenylyltransferase (162 aa).

Substrate is bound at residue threonine 10. ATP contacts are provided by residues 10-11 (TF) and histidine 18. Residues lysine 42, leucine 74, and arginine 88 each coordinate substrate. ATP is bound by residues 89–91 (GLR), glutamate 99, and 124–130 (NSFISST).

This sequence belongs to the bacterial CoaD family. As to quaternary structure, homohexamer. It depends on Mg(2+) as a cofactor.

It is found in the cytoplasm. It catalyses the reaction (R)-4'-phosphopantetheine + ATP + H(+) = 3'-dephospho-CoA + diphosphate. The protein operates within cofactor biosynthesis; coenzyme A biosynthesis; CoA from (R)-pantothenate: step 4/5. Its function is as follows. Reversibly transfers an adenylyl group from ATP to 4'-phosphopantetheine, yielding dephospho-CoA (dPCoA) and pyrophosphate. In Alteromonas mediterranea (strain DSM 17117 / CIP 110805 / LMG 28347 / Deep ecotype), this protein is Phosphopantetheine adenylyltransferase.